The chain runs to 104 residues: Phosphoribosyl-ATP pyrophosphatase (104 aa).

It belongs to the PRA-PH family.

Its subcellular location is the cytoplasm. The catalysed reaction is 1-(5-phospho-beta-D-ribosyl)-ATP + H2O = 1-(5-phospho-beta-D-ribosyl)-5'-AMP + diphosphate + H(+). It participates in amino-acid biosynthesis; L-histidine biosynthesis; L-histidine from 5-phospho-alpha-D-ribose 1-diphosphate: step 2/9. The protein is Phosphoribosyl-ATP pyrophosphatase of Nitrosococcus oceani (strain ATCC 19707 / BCRC 17464 / JCM 30415 / NCIMB 11848 / C-107).